The sequence spans 123 residues: Large ribosomal subunit protein bL12 (123 aa).

Belongs to the bacterial ribosomal protein bL12 family. Homodimer. Part of the ribosomal stalk of the 50S ribosomal subunit. Forms a multimeric L10(L12)X complex, where L10 forms an elongated spine to which 2 to 4 L12 dimers bind in a sequential fashion. Binds GTP-bound translation factors.

Functionally, forms part of the ribosomal stalk which helps the ribosome interact with GTP-bound translation factors. Is thus essential for accurate translation. The polypeptide is Large ribosomal subunit protein bL12 (Acholeplasma laidlawii (strain PG-8A)).